The chain runs to 445 residues: Argininosuccinate synthase (445 aa).

Residues 17 to 25 (AFSGGLDTS) and A43 contribute to the ATP site. Y99 contacts L-citrulline. Residues G129 and T131 each contribute to the ATP site. L-aspartate contacts are provided by T131, N135, and D136. N135 lines the L-citrulline pocket. D136 is an ATP binding site. L-citrulline-binding residues include R139 and S192. Residue D194 participates in ATP binding. T201, E203, and E280 together coordinate L-citrulline.

It belongs to the argininosuccinate synthase family. Type 2 subfamily. In terms of assembly, homotetramer.

It localises to the cytoplasm. It carries out the reaction L-citrulline + L-aspartate + ATP = 2-(N(omega)-L-arginino)succinate + AMP + diphosphate + H(+). It functions in the pathway amino-acid biosynthesis; L-arginine biosynthesis; L-arginine from L-ornithine and carbamoyl phosphate: step 2/3. The protein is Argininosuccinate synthase of Burkholderia ambifaria (strain ATCC BAA-244 / DSM 16087 / CCUG 44356 / LMG 19182 / AMMD) (Burkholderia cepacia (strain AMMD)).